The sequence spans 25 residues: Spinigerin (25 aa).

The protein resides in the secreted. In terms of biological role, active against Gram-positive bacteria B.megaterium and M.luteus, Gram-negative bacteria E.coli SBS363 and D22, K.pneumoniae, S.typhimurium and P.aeruginosa, yeast C.albicans and filamentous fungi F.culmorum, N.crassa, N.hematococca and T.viridae. Inactive against Gram-positive bacteria B.subtilis, S.pyogenes, B.thuringiensis and S.aureus, Gram-negative bacteria E.cloacae and E.carotovora and filamentous fungus B.bassiana. This Pseudacanthotermes spiniger protein is Spinigerin.